Consider the following 118-residue polypeptide: Small integral membrane protein 17 (118 aa).

A disordered region spans residues M1–F84. Over residues L13–E42 the composition is skewed to basic and acidic residues. A helical transmembrane segment spans residues I96–F116.

It localises to the membrane. In Homo sapiens (Human), this protein is Small integral membrane protein 17 (SMIM17).